The primary structure comprises 288 residues: NAD kinase (288 aa).

D73 serves as the catalytic Proton acceptor. NAD(+) contacts are provided by residues 73–74 (DG), R78, 144–145 (NE), D174, 185–190 (TAYSLS), and A209.

The protein belongs to the NAD kinase family. A divalent metal cation serves as cofactor.

It is found in the cytoplasm. The catalysed reaction is NAD(+) + ATP = ADP + NADP(+) + H(+). In terms of biological role, involved in the regulation of the intracellular balance of NAD and NADP, and is a key enzyme in the biosynthesis of NADP. Catalyzes specifically the phosphorylation on 2'-hydroxyl of the adenosine moiety of NAD to yield NADP. The polypeptide is NAD kinase (Porphyromonas gingivalis (strain ATCC BAA-308 / W83)).